The sequence spans 350 residues: Hydroxymethylglutaryl-CoA synthase (350 aa).

Glu-83 (proton donor/acceptor) is an active-site residue. Cys-115 functions as the Acyl-thioester intermediate in the catalytic mechanism. (3S)-3-hydroxy-3-methylglutaryl-CoA contacts are provided by Cys-115 and Thr-156. Position 204 (Arg-204) interacts with CoA. Residues Thr-206 and His-239 each coordinate (3S)-3-hydroxy-3-methylglutaryl-CoA. His-239 acts as the Proton donor/acceptor in catalysis. Position 244 (Lys-244) interacts with CoA. (3S)-3-hydroxy-3-methylglutaryl-CoA contacts are provided by Asn-271 and Ser-301.

It belongs to the thiolase-like superfamily. Archaeal HMG-CoA synthase family. In terms of assembly, interacts with acetoacetyl-CoA thiolase that catalyzes the precedent step in the pathway and with a DUF35 protein. The acetoacetyl-CoA thiolase/HMG-CoA synthase complex channels the intermediate via a fused CoA-binding site, which allows for efficient coupling of the endergonic thiolase reaction with the exergonic HMGCS reaction.

It catalyses the reaction acetoacetyl-CoA + acetyl-CoA + H2O = (3S)-3-hydroxy-3-methylglutaryl-CoA + CoA + H(+). It participates in metabolic intermediate biosynthesis; (R)-mevalonate biosynthesis; (R)-mevalonate from acetyl-CoA: step 2/3. Functionally, catalyzes the condensation of acetyl-CoA with acetoacetyl-CoA to form 3-hydroxy-3-methylglutaryl-CoA (HMG-CoA). Functions in the mevalonate (MVA) pathway leading to isopentenyl diphosphate (IPP), a key precursor for the biosynthesis of isoprenoid compounds that are building blocks of archaeal membrane lipids. This Pyrococcus horikoshii (strain ATCC 700860 / DSM 12428 / JCM 9974 / NBRC 100139 / OT-3) protein is Hydroxymethylglutaryl-CoA synthase.